We begin with the raw amino-acid sequence, 289 residues long: 4-hydroxybenzoate octaprenyltransferase (289 aa).

Helical transmembrane passes span 33-53 (LWAL…AVFV), 99-119 (LFVV…TMTI), 141-161 (LPQV…FAAV), 163-183 (ESVP…AVAY), 213-233 (LIIG…GRLN), 238-258 (EFYW…KLIV), and 268-288 (AFLN…MSYW).

Belongs to the UbiA prenyltransferase family. Mg(2+) is required as a cofactor.

It is found in the cell inner membrane. The enzyme catalyses all-trans-octaprenyl diphosphate + 4-hydroxybenzoate = 4-hydroxy-3-(all-trans-octaprenyl)benzoate + diphosphate. Its pathway is cofactor biosynthesis; ubiquinone biosynthesis. Catalyzes the prenylation of para-hydroxybenzoate (PHB) with an all-trans polyprenyl group. Mediates the second step in the final reaction sequence of ubiquinone-8 (UQ-8) biosynthesis, which is the condensation of the polyisoprenoid side chain with PHB, generating the first membrane-bound Q intermediate 3-octaprenyl-4-hydroxybenzoate. The polypeptide is 4-hydroxybenzoate octaprenyltransferase (Enterobacter sp. (strain 638)).